A 465-amino-acid chain; its full sequence is Iron-sulfur cluster assembly SufBD family protein SERP0500 (465 aa).

Belongs to the iron-sulfur cluster assembly SufBD family.

The sequence is that of Iron-sulfur cluster assembly SufBD family protein SERP0500 from Staphylococcus epidermidis (strain ATCC 35984 / DSM 28319 / BCRC 17069 / CCUG 31568 / BM 3577 / RP62A).